The chain runs to 228 residues: Urease subunit gamma/beta (228 aa).

The interval 1–101 (MQLTERERDK…LVTVHDPIRG (101 aa)) is urease gamma. Positions 102–228 (AASRRVAGEY…ARAAGFGGAQ (127 aa)) are urease beta.

It in the N-terminal section; belongs to the urease gamma subunit family. This sequence in the C-terminal section; belongs to the urease beta subunit family. Heterohexamer of 3 UreC (alpha) and 3 UreAB (gamma/beta) subunits.

It localises to the cytoplasm. It catalyses the reaction urea + 2 H2O + H(+) = hydrogencarbonate + 2 NH4(+). Its pathway is nitrogen metabolism; urea degradation; CO(2) and NH(3) from urea (urease route): step 1/1. In Deinococcus radiodurans (strain ATCC 13939 / DSM 20539 / JCM 16871 / CCUG 27074 / LMG 4051 / NBRC 15346 / NCIMB 9279 / VKM B-1422 / R1), this protein is Urease subunit gamma/beta.